Reading from the N-terminus, the 253-residue chain is tRNA pseudouridine synthase A (253 aa).

D53 serves as the catalytic Nucleophile. Y111 serves as a coordination point for substrate.

The protein belongs to the tRNA pseudouridine synthase TruA family. As to quaternary structure, homodimer.

The catalysed reaction is uridine(38/39/40) in tRNA = pseudouridine(38/39/40) in tRNA. Functionally, formation of pseudouridine at positions 38, 39 and 40 in the anticodon stem and loop of transfer RNAs. This Oceanobacillus iheyensis (strain DSM 14371 / CIP 107618 / JCM 11309 / KCTC 3954 / HTE831) protein is tRNA pseudouridine synthase A.